The following is a 530-amino-acid chain: Probable NADH-specific resorcinol 4-hydroxylase (530 aa).

It catalyses the reaction resorcinol + NADH + O2 + H(+) = benzene-1,2,4-triol + NAD(+) + H2O. In terms of biological role, single-component hydroxylase that is part of the gamma-resorcylate (GRA) degradation pathway. GRA is initially converted by GRA decarboxylase to resorcinol, which is hydroxylated by resorcinol 4-hydroxylase. This chain is Probable NADH-specific resorcinol 4-hydroxylase (tsdB), found in Rhodococcus jostii (strain RHA1).